The sequence spans 403 residues: 26S proteasome regulatory subunit 6B homolog (403 aa).

Residue Met-1 is modified to N-acetylmethionine. 191 to 198 is an ATP binding site; that stretch reads GPPGTGKT.

It belongs to the AAA ATPase family.

The protein resides in the cytoplasm. The protein localises to the nucleus. The 26S proteasome is involved in the ATP-dependent degradation of ubiquitinated proteins. The regulatory (or ATPase) complex confers ATP dependency and substrate specificity to the 26S complex. The chain is 26S proteasome regulatory subunit 6B homolog (psmC4) from Dictyostelium discoideum (Social amoeba).